Here is a 1365-residue protein sequence, read N- to C-terminus: Serine-aspartate repeat-containing protein D (1365 aa).

The N-terminal stretch at 1–35 (MLNRENKTAITRKGMVSNRLNKFSIRKYTVGTASI) is a signal peptide. The YSIRK-G/S signaling motif motif lies at 23 to 34 (FSIRKYTVGTAS). Positions 36 to 568 (LVGTTLIFGL…NNQSGGAGQE (533 aa)) are ligand binding A region. The interval 54-185 (ESTNKELNEA…NKKVDAKTES (132 aa)) is disordered. Polar residues-rich tracts occupy residues 62–71 (EATTSASDNQ) and 94–109 (EMVS…NGNK). The segment covering 130-145 (KSDEQASPKSTNEDLN) has biased composition (basic and acidic residues). Polar residues-rich tracts occupy residues 146–155 (TKQTISNQEA) and 163–173 (NKSVVNAQPTN). Over residues 174 to 183 (EENKKVDAKT) the composition is skewed to basic and acidic residues. CNA-B domains lie at 569–680 (VYKI…IYKP), 681–791 (KYNL…YKTP), 792–901 (KYNL…FYKP), 902–1012 (TYNL…YKTP), and 1013–1123 (KYSL…EEDT). Disordered regions lie at residues 857–884 (ETPS…STTG), 972–991 (YTPT…NGLT), and 1078–1341 (EKPA…SNNA). Polar residues-rich tracts occupy residues 860-869 (SGYTPTQVGS) and 972-981 (YTPTSVTSGN). Acidic residues-rich tracts occupy residues 1091 to 1101 (TEDDKDADGGE) and 1118 to 1304 (YFEE…DSDS). The LPXTG sorting signal signature appears at 1328 to 1332 (LPETG). Threonine 1331 is modified (pentaglycyl murein peptidoglycan amidated threonine). Positions 1332 to 1365 (GNENSGSNNATLFGGLFAALGSLLLFGRRKKQNK) are cleaved as a propeptide — removed by sortase.

This sequence belongs to the serine-aspartate repeat-containing protein (SDr) family. In terms of assembly, interacts with host DSG1; this interaction increases S.aureus adherence to keratinocytes.

It localises to the secreted. The protein localises to the cell wall. Functionally, cell surface-associated calcium-binding protein which plays an important role in adhesion and pathogenesis. Mediates interactions with components of the extracellular matrix such as host DSG1 to promote bacterial adhesion to host cells. Contributes to the resistance to killing by innate immune components such as neutrophils present in blood and thus attenuates bacterial clearance. The sequence is that of Serine-aspartate repeat-containing protein D (sdrD) from Staphylococcus aureus (strain MSSA476).